Reading from the N-terminus, the 977-residue chain is uncharacterized protein (977 aa).

A signal peptide spans 1–24 (MQSNLLKVLGVLAIVATLVCFIFA). The disordered stretch occupies residues 125–146 (TESTRPGKSNLDDKGNMIPIPR). 6 helical membrane passes run 612-632 (IKAI…LGFA), 722-742 (LGLS…IVII), 754-774 (AFMA…FLLF), 796-816 (VVMM…LDFV), 833-853 (FIGT…INWF), and 866-886 (GVNM…YGYV). Residues 918-977 (KALSPIGMDDKTRQGITGRAEARLKQRNKTLDQAEKNRKNTPKEGGEKTNAEPPQPEARG) form a disordered region. Over residues 937–967 (AEARLKQRNKTLDQAEKNRKNTPKEGGEKTN) the composition is skewed to basic and acidic residues.

Belongs to the TrbL/VirB6 family.

It localises to the cell membrane. This is an uncharacterized protein from Rickettsia felis (strain ATCC VR-1525 / URRWXCal2) (Rickettsia azadi).